The chain runs to 247 residues: Cobalt transport protein CbiM (247 aa).

Positions M1–A21 are cleaved as a signal peptide. The next 7 membrane-spanning stretches (helical) occupy residues G27 to L47, L64 to V84, L96 to F116, L119 to V139, G159 to L179, L181 to S201, and I202 to V222.

This sequence belongs to the CbiM family. Forms an energy-coupling factor (ECF) transporter complex composed of an ATP-binding protein (A component, CbiO), a transmembrane protein (T component, CbiQ) and 2 possible substrate-capture proteins (S components, CbiM and CbiN) of unknown stoichimetry.

The protein localises to the cell membrane. The protein operates within cofactor biosynthesis; adenosylcobalamin biosynthesis. Functionally, part of the energy-coupling factor (ECF) transporter complex CbiMNOQ involved in cobalt import. The polypeptide is Cobalt transport protein CbiM (Kyrpidia tusciae (strain DSM 2912 / NBRC 15312 / T2) (Bacillus tusciae)).